Reading from the N-terminus, the 288-residue chain is Acetyl-coenzyme A carboxylase carboxyl transferase subunit beta (288 aa).

Residues 34 to 288 form the CoA carboxyltransferase N-terminal domain; sequence LFAKCPACKH…HLVAFHGGGQ (255 aa). Positions 38, 41, 56, and 59 each coordinate Zn(2+). The segment at 38–59 adopts a C4-type zinc-finger fold; it reads CPACKHMIYKKDLGLAKICPTC.

Belongs to the AccD/PCCB family. In terms of assembly, acetyl-CoA carboxylase is a heterohexamer composed of biotin carboxyl carrier protein (AccB), biotin carboxylase (AccC) and two subunits each of ACCase subunit alpha (AccA) and ACCase subunit beta (AccD). Zn(2+) is required as a cofactor.

The protein resides in the cytoplasm. The enzyme catalyses N(6)-carboxybiotinyl-L-lysyl-[protein] + acetyl-CoA = N(6)-biotinyl-L-lysyl-[protein] + malonyl-CoA. Its pathway is lipid metabolism; malonyl-CoA biosynthesis; malonyl-CoA from acetyl-CoA: step 1/1. Its function is as follows. Component of the acetyl coenzyme A carboxylase (ACC) complex. Biotin carboxylase (BC) catalyzes the carboxylation of biotin on its carrier protein (BCCP) and then the CO(2) group is transferred by the transcarboxylase to acetyl-CoA to form malonyl-CoA. This chain is Acetyl-coenzyme A carboxylase carboxyl transferase subunit beta, found in Streptococcus pyogenes serotype M1.